We begin with the raw amino-acid sequence, 255 residues long: EEF1A lysine methyltransferase 4 (255 aa).

S-adenosyl-L-methionine-binding residues include Trp-26 and Tyr-30. Residue Tyr-39 is modified to Phosphotyrosine. S-adenosyl-L-methionine is bound by residues Trp-41, Gly-66, 88–89 (DY), 113–114 (DV), and Lys-130. A Required for methyltransferase activity motif is present at residues 129-134 (EKGTLD).

This sequence belongs to the methyltransferase superfamily.

The enzyme catalyses L-lysyl-[protein] + S-adenosyl-L-methionine = N(6)-methyl-L-lysyl-[protein] + S-adenosyl-L-homocysteine + H(+). It carries out the reaction N(6)-methyl-L-lysyl-[protein] + S-adenosyl-L-methionine = N(6),N(6)-dimethyl-L-lysyl-[protein] + S-adenosyl-L-homocysteine + H(+). The catalysed reaction is N(6),N(6)-dimethyl-L-lysyl-[protein] + S-adenosyl-L-methionine = N(6),N(6),N(6)-trimethyl-L-lysyl-[protein] + S-adenosyl-L-homocysteine + H(+). Functionally, protein-lysine methyltransferase that efficiently catalyzes three successive methylations on 'Lys-36' in eukaryotic translation elongation factor 1 alpha (EEF1A1 or EEF1A2). This Bos taurus (Bovine) protein is EEF1A lysine methyltransferase 4.